The sequence spans 600 residues: Long-chain-fatty-acid--CoA ligase FadD15 (600 aa).

Belongs to the ATP-dependent AMP-binding enzyme family.

It catalyses the reaction a long-chain fatty acid + ATP + CoA = a long-chain fatty acyl-CoA + AMP + diphosphate. The enzyme catalyses dodecanoate + ATP + CoA = dodecanoyl-CoA + AMP + diphosphate. The catalysed reaction is hexadecanoate + ATP + CoA = hexadecanoyl-CoA + AMP + diphosphate. It functions in the pathway lipid metabolism; fatty acid biosynthesis. In terms of biological role, catalyzes the activation of long-chain fatty acids as acyl-coenzyme A (acyl-CoA), which are then transferred to the multifunctional polyketide synthase (PKS) type III for further chain extension. This chain is Long-chain-fatty-acid--CoA ligase FadD15 (fadD15), found in Mycobacterium tuberculosis (strain ATCC 25618 / H37Rv).